The following is a 177-amino-acid chain: Large ribosomal subunit protein uL6 (177 aa).

The protein belongs to the universal ribosomal protein uL6 family. In terms of assembly, part of the 50S ribosomal subunit.

In terms of biological role, this protein binds to the 23S rRNA, and is important in its secondary structure. It is located near the subunit interface in the base of the L7/L12 stalk, and near the tRNA binding site of the peptidyltransferase center. The chain is Large ribosomal subunit protein uL6 from Ruegeria pomeroyi (strain ATCC 700808 / DSM 15171 / DSS-3) (Silicibacter pomeroyi).